Reading from the N-terminus, the 157-residue chain is Arginine repressor (157 aa).

The protein belongs to the ArgR family.

It localises to the cytoplasm. Its pathway is amino-acid biosynthesis; L-arginine biosynthesis [regulation]. Its function is as follows. Regulates arginine biosynthesis genes. This chain is Arginine repressor, found in Deinococcus radiodurans (strain ATCC 13939 / DSM 20539 / JCM 16871 / CCUG 27074 / LMG 4051 / NBRC 15346 / NCIMB 9279 / VKM B-1422 / R1).